Consider the following 1456-residue polypeptide: MIESENLNRGEIIKELCLCNGLTYEIVGQEGSDTSKLEMFFSGYPRIVGLSLFHNLSSLTIVAQDIREISGLETCLQLKELWIAECCIEKIEGLQGCRNLEKLYLYYNKISKIENLEKLIKLEVLWLNHNMIKNIEGLQTLKNLKDLNLAGNLVSSIGRCLDPNEQLEKLNLSGNQITSFKDLTNLTKLTRLKDLCLNDPQYKSNPVCQLCNYSTHVLYHLPSLQRLDTFDVSAKQIKELADSTAMKKIMYYNMRIKTVQRHLNEELEKLNDRKCKLQKLPEERIKLFNFAKKTLERELAELKISSKGQSDTTPEAEKPRNSEVVTQESVLQQKILTKLSALDDRVTFWNKKLHEIEAIYRTEVKQKKKTHGLLTPFLLTELETVGNIHFEEGTQADDWFNSCCELILSRFCTWDFRAYGITGVKVKRVIKVNNRILRLKFEEKFQKCLDLEDTQDPDYRKMLECLFYVFDPEVTVKKKHLLQILERGFKDSDTSKPSLKKEAVTLVNSLSMCECPRIEFLQQKYKEEKKGPSESELYRHGTILIAKVFLGQSIQARDQEPINKANYPMVNSVFVPQRHVLRQRTCDCGYRQYKWFVFDHDLVLPEYIVEFEYTTVVKVHSLFSTSNNVILEEGKKYSEGLVFSQDLKFDDEVLKMEPRIKPRPKLISLDEKTIISLAKTNIYSHIVNLNLHGNSLSKLRDLAKLTGLRKLNISFNEFTCLDDVYHLYNLEYLDASHNHVITLEGFRGLMKLKHLDLSWNQLKKTGEEINVLCKHTTSLLTLDIQHNPWQKPATLRLSVIGRLKTLTHLDGLVISEEETRAALKFISGTKITQLTLLQHSSSKEERPRMLSTWPSAKILTQISKLGPHFHLTGNWYSKITALNLDGQHLFEITNLEKLENLKWASFSNNNLSKMEGLESCVNLEELTLDGNCISKIEGITRLTKLSRLSMNNNLLTGLEKHTFDNLLHLHSLSLENNRITSLSALQKTFTLIELYISNNYIAVNQEIYNLKGLCNLVILDMYGNIIIWNQENYRFFVIFHLPELKALDGVSIETSETETAKDLFGGRLTSDMIAERQGHSNFIQMQELNWTSSAIRTVDLIPVDHFRNVSNVNLQNNNLTSFSGLIYLPNVKVLCLNYNHIESIMPRLKPQTHLSSRQLLYQKVPSSGYGQQGTSKLNRDSVGSENLPPIMQSLEVLHLGYNGICNLVQLQLNRLRNLKFLFLQGNEISQVEGLDNLIVLQELVVDHNRIRAFNDTAFSKPSSLLMLHLEENRLRELSKLQSLVKLEKLFLGYNKIQDITELEKLDVIPSLRELTVYGNPICRKMVHRHVLIFRLPNLQMLDGIPINSDDRAKAEFHFSELQAKKSSIIQNNLPTSKSSLPSHLQTPLPCKFVPVTNSTDGGSFCHVKASPIKITNVLLPAGFSRFLGPDFTLTPEVEGIFTKSFRENEKTNKQQQ.

LRR repeat units lie at residues 53 to 78, 97 to 119, 120 to 141, 142 to 164, 166 to 188, 190 to 212, 224 to 248, and 264 to 287; these read FHNL…CLQL, CRNL…LEKL, IKLE…LQTL, KNLK…LDPN, QLEK…NLTK, TRLK…QLCN, LQRL…AMKK, and NEEL…RIKL. Positions 305 to 325 are disordered; the sequence is SSKGQSDTTPEAEKPRNSEVV. One copy of the LRR 9 repeat lies at 339–362; that stretch reads LSALDDRVTFWNKKLHEIEAIYRT. At tyrosine 525 the chain carries Phosphotyrosine. LRR repeat units follow at residues 661–683, 684–705, 706–727, 729–748, 749–772, 776–802, 806–833, 876–898, 899–920, 921–942, 943–965, 967–991, 993–1010, 1013–1037, 1082–1105, 1106–1128, 1129–1151, 1191–1214, 1215–1237, 1238–1260, 1262–1283, 1284–1307, and 1309–1335; these read KPRP…TNIY, SHIV…LAKL, TGLR…VYHL, NLEY…GFRG, LMKL…INVL, TTSL…VIGR, LTHL…KITQ, YSKI…LEKL, ENLK…LESC, VNLE…ITRL, TKLS…TFDN, LHLH…TFTL, ELYI…IYNL, LCNL…RFFV, FIQM…PVDH, FRNV…LIYL, PNVK…LKPQ, MQSL…QLNR, LRNL…LDNL, IVLQ…AFSK, SSLL…LQSL, VKLE…KLDV, and PSLR…IFRL.

This Mus musculus (Mouse) protein is Leucine-rich repeat-containing protein 9 (Lrrc9).